A 514-amino-acid polypeptide reads, in one-letter code: ATP synthase subunit alpha (514 aa).

170-177 (GDRQTGKT) contributes to the ATP binding site.

The protein belongs to the ATPase alpha/beta chains family. F-type ATPases have 2 components, CF(1) - the catalytic core - and CF(0) - the membrane proton channel. CF(1) has five subunits: alpha(3), beta(3), gamma(1), delta(1), epsilon(1). CF(0) has three main subunits: a(1), b(2) and c(9-12). The alpha and beta chains form an alternating ring which encloses part of the gamma chain. CF(1) is attached to CF(0) by a central stalk formed by the gamma and epsilon chains, while a peripheral stalk is formed by the delta and b chains.

Its subcellular location is the cell inner membrane. It carries out the reaction ATP + H2O + 4 H(+)(in) = ADP + phosphate + 5 H(+)(out). Produces ATP from ADP in the presence of a proton gradient across the membrane. The alpha chain is a regulatory subunit. The polypeptide is ATP synthase subunit alpha (Psychrobacter cryohalolentis (strain ATCC BAA-1226 / DSM 17306 / VKM B-2378 / K5)).